The chain runs to 502 residues: MAMATGKATEEEQPEQGQQQQQLQQQQKQTTLQSTYRFALFFIAGCLAAFGFHALTSSSGSLLGWRLRLHHLPTAHYLQTRDEFAVYSVDELNAFKEFYDKSVSDSVGASLSEAEETNIKEAMGALRLAQEMYMTGKDDKAARLFEHALALAPKHPEVLLRYGEFLEHNQRNIVLADQYYFQALSINPSNTEALANRQRTADVVQLLDERRLSSLDEKRDALSAIHEANSALRRAKKEAYFQHIYHSVGIEGNTMTLAQTRSVLETRMAVDGKSIDEHNEILGMDLAMKYINASLVQKLYITLKDILELHRRVLGHVDPIEGGEFRRNQVYVGGHIPPGPGDLAILMQRFEHWLNSEQSNSLHPVNYAALAHYKLVHIHPFVDGNGRTSRLLMNTLLMRAGYPPVIIPKQQRSQYYHFLKLANEGDIRPFVRFIADCTEKTLDLYLWATSDLPQQIPMLIQTESDGNVLAQLQSHTSSPELYESGSGSGAGAGAGSGQKGMP.

Residues 1-24 (MAMATGKATEEEQPEQGQQQQQLQ) form a disordered region. Residues 15 to 24 (EQGQQQQQLQ) show a composition bias toward low complexity. A helical membrane pass occupies residues 38 to 60 (FALFFIAGCLAAFGFHALTSSSG). 2 TPR repeats span residues 122–155 (AMGA…APKH) and 156–190 (PEVL…NPSN). Residues 247–252 (SVGIEG) carry the Inhibitory (S/T)XXXE(G/N) motif motif. Residues Glu-251 and 332–335 (VGGH) contribute to the ATP site. A Fido domain is found at 301-436 (ITLKDILELH…IRPFVRFIAD (136 aa)). His-379 is a catalytic residue. Residues 383 to 390 (DGNGRTSR), 415 to 416 (YY), and Asn-423 each bind ATP. The tract at residues 478 to 502 (SPELYESGSGSGAGAGAGSGQKGMP) is disordered. The segment covering 486-502 (SGSGAGAGAGSGQKGMP) has biased composition (gly residues).

The protein belongs to the fic family. In terms of assembly, homodimer.

The protein resides in the membrane. It catalyses the reaction L-tyrosyl-[protein] + ATP = O-(5'-adenylyl)-L-tyrosyl-[protein] + diphosphate. It carries out the reaction L-threonyl-[protein] + ATP = 3-O-(5'-adenylyl)-L-threonyl-[protein] + diphosphate. The catalysed reaction is 3-O-(5'-adenylyl)-L-threonyl-[protein] + H2O = L-threonyl-[protein] + AMP + H(+). With respect to regulation, the side chain of Glu-251 determines which of the two opposing activities (AMPylase or de-AMPylase) will take place. In response to endoplasmic reticulum stress, mediates de-AMPylase activity. Adenylyltransferase activity is inhibited by the inhibitory helix present at the N-terminus: Glu-251 binds ATP and competes with ATP-binding at Arg-390, thereby preventing adenylyltransferase activity. In unstressed cells, disengagement of Glu-251 promotes adenylyltransferase activity. Activation dissociates ATP-binding from Glu-251, allowing ordered binding of the entire ATP moiety with the alpha-phosphate in an orientation that is productive for accepting an incoming target hydroxyl side chain. Protein that can both mediate the addition of adenosine 5'-monophosphate (AMP) to specific residues of target proteins (AMPylation), and the removal of the same modification from target proteins (de-AMPylation), depending on the context. The side chain of Glu-251 determines which of the two opposing activities (AMPylase or de-AMPylase) will take place. Acts as a key regulator of the unfolded protein response (UPR) by mediating AMPylation or de-AMPylation of Hsc70-3/BiP. In unstressed cells, acts as an adenylyltransferase by mediating AMPylation of Hsc70-3/BiP at 'Thr-518', thereby inactivating it. In response to endoplasmic reticulum stress, acts as a phosphodiesterase by mediating removal of ATP (de-AMPylation) from Hsc70-3/BiP at 'Thr-518', leading to restore HSPA5/BiP activity. The sequence is that of Protein adenylyltransferase Fic from Drosophila mojavensis (Fruit fly).